Here is a 64-residue protein sequence, read N- to C-terminus: U9-ctenitoxin-Pr1a (64 aa).

Cystine bridges form between Cys3-Cys15, Cys9-Cys24, Cys14-Cys47, Cys34-Cys55, and Cys49-Cys61.

Expressed by the venom gland.

Its subcellular location is the secreted. In terms of biological role, non-toxic to mice and insects. The chain is U9-ctenitoxin-Pr1a from Phoneutria reidyi (Brazilian Amazonian armed spider).